The primary structure comprises 563 residues: Lengsin (563 aa).

Positions 1 to 115 (MTDEGDLAQE…PNTDPTRYNA (115 aa)) are disordered. Basic residues predominate over residues 26-37 (SKLRRARRKVTK). Composition is skewed to polar residues over residues 51–62 (ANSSEMSRNQIA) and 105–115 (SPNTDPTRYNA). The GS beta-grasp domain occupies 137-231 (NHLQFVRFEA…VICDTFTVTG (95 aa)). The region spanning 238–563 (PRYIAKRQLR…EGNKFLEYFI (326 aa)) is the GS catalytic domain.

This sequence belongs to the glutamine synthetase family. Dodecamer. Interacts with BFSP2 and VIM. As to expression, expressed in lens.

Its function is as follows. May act as a component of the cytoskeleton or as a chaperone for the reorganization of intermediate filament proteins during terminal differentiation in the lens. Does not seem to have enzymatic activity. The sequence is that of Lengsin (Lgsn) from Mus musculus (Mouse).